We begin with the raw amino-acid sequence, 127 residues long: uncharacterized protein (127 aa).

Positions 1–34 (MKNPESSGVSSSPQIQRVSPSSSSTSPSPPSIGT) are disordered. Residues 9-34 (VSSSPQIQRVSPSSSSTSPSPPSIGT) are compositionally biased toward low complexity. A run of 2 helical transmembrane segments spans residues 47 to 67 (IAAV…PLAM) and 84 to 104 (TIAV…YLLV).

The protein resides in the membrane. This is an uncharacterized protein from Saccharomyces cerevisiae (strain ATCC 204508 / S288c) (Baker's yeast).